A 349-amino-acid polypeptide reads, in one-letter code: Tetraacyldisaccharide 4'-kinase (349 aa).

58–65 (TAGGSGKT) provides a ligand contact to ATP.

The protein belongs to the LpxK family.

It catalyses the reaction a lipid A disaccharide + ATP = a lipid IVA + ADP + H(+). Its pathway is glycolipid biosynthesis; lipid IV(A) biosynthesis; lipid IV(A) from (3R)-3-hydroxytetradecanoyl-[acyl-carrier-protein] and UDP-N-acetyl-alpha-D-glucosamine: step 6/6. In terms of biological role, transfers the gamma-phosphate of ATP to the 4'-position of a tetraacyldisaccharide 1-phosphate intermediate (termed DS-1-P) to form tetraacyldisaccharide 1,4'-bis-phosphate (lipid IVA). This Shewanella amazonensis (strain ATCC BAA-1098 / SB2B) protein is Tetraacyldisaccharide 4'-kinase.